Here is a 165-residue protein sequence, read N- to C-terminus: UPF0763 protein NIS_0363 (165 aa).

Belongs to the UPF0763 family.

This chain is UPF0763 protein NIS_0363, found in Nitratiruptor sp. (strain SB155-2).